Consider the following 344-residue polypeptide: UDP-N-acetylglucosamine transporter UGNT1 (344 aa).

Residues 1-23 (MRNNPVLPVSDPPLAGENDSDGK) form a disordered region. The next 9 membrane-spanning stretches (helical) occupy residues 41–61 (YAALSYMACAVMLVLFNKAAL), 66–86 (FPCVNVITLFQMVSSSLFLYA), 92–112 (IISFTAADSFSIDSASTFVPV), 114–134 (TLFHTLPLAIAYLLYMLASMA), 167–187 (YTRSIIGSVGIILLGAFFAGA), 194–214 (FYGYGVVFLANISTAVYLATI), 226–246 (FGLMWSNGIICGPILMIWTFI), 264–284 (FMVVLLCSCVLAFVLNYCIFL), and 304–324 (FTVGLGWMLFGGLPFDLMNVI).

This sequence belongs to the TPT transporter family. UGnT (TC 2.A.7.15) subfamily. Expressed in roots, leaves, stems, flowers and siliques.

The protein localises to the golgi apparatus membrane. Its function is as follows. Mediates the transport of UDP-N-acetylglucosamine (UDP-GlcNAc) across the Golgi apparatus membrane. Delivers an essential substrate for the maturation of N-glycans and the GlcNAc-containing glycosyl inositol phosphorylceramide (GIPC) class of sphingolipids in the Golgi apparatus. The protein is UDP-N-acetylglucosamine transporter UGNT1 of Arabidopsis thaliana (Mouse-ear cress).